The primary structure comprises 183 residues: Protein Syd (183 aa).

Belongs to the Syd family.

The protein resides in the cell inner membrane. In terms of biological role, interacts with the SecY protein in vivo. May bind preferentially to an uncomplexed state of SecY, thus functioning either as a chelating agent for excess SecY in the cell or as a regulatory factor that negatively controls the translocase function. The protein is Protein Syd of Aliivibrio fischeri (strain MJ11) (Vibrio fischeri).